Here is a 283-residue protein sequence, read N- to C-terminus: Non-selective voltage-gated ion channel VDAC3 (283 aa).

At Cys2 the chain carries N-acetylcysteine. Thr4 is modified (phosphothreonine). Residues Lys12, Lys15, and Lys20 each carry the N6-acetyllysine modification. A run of 2 beta stranded transmembrane segments spans residues 26 to 35 (MVKIDLKTKS) and 39 to 47 (VEFSTSGHA). Thr33 is subject to Phosphothreonine. Lys53 participates in a covalent cross-link: Glycyl lysine isopeptide (Lys-Gly) (interchain with G-Cter in ubiquitin). Beta stranded transmembrane passes span 54–64 (ASGNLETKYKV), 69–76 (LIFTQKWN), and 80–89 (TLGTEISWEN). An N6-acetyllysine modification is found at Lys90. The beta stranded transmembrane segment at 95–104 (LKLTVDTIFV) threads the bilayer. Glycyl lysine isopeptide (Lys-Gly) (interchain with G-Cter in ubiquitin) cross-links involve residues Lys109 and Lys110. A run of 10 beta stranded transmembrane segments spans residues 111-120 (SGKLKASYRR), 123-130 (FSVGSKVD), 137-145 (TIYGWAVLA), 150-158 (LAGYQMSFD), 163-175 (KLCQ…GYKA), 178-185 (FQLHTHVN), 189-198 (EFGGSIYQRV), 202-211 (IETSINLAWT), 218-227 (RFGIAAKYRL), and 231-238 (TSLSAKVN). Ser241 is subject to Phosphoserine. NAD(+) contacts are provided by residues 242–244 (LIG) and 260–264 (SALVD). The next 2 membrane-spanning stretches (beta stranded) occupy residues 242–251 (LIGLGYTQSL) and 254–263 (GVKLTLSALV). Lys266 carries the post-translational modification N6-acetyllysine; alternate. Lys266 is covalently cross-linked (Glycyl lysine isopeptide (Lys-Gly) (interchain with G-Cter in ubiquitin); alternate). Residues 273-282 (HKVGLGFELE) form a beta stranded membrane-spanning segment.

This sequence belongs to the eukaryotic mitochondrial porin family. As to quaternary structure, interacts with ARMC12 in a TBC1D21-dependent manner. Interacts with MISFA. Ubiquitinated by PRKN during mitophagy, leading to its degradation and enhancement of mitophagy. Deubiquitinated by USP30. In terms of tissue distribution, isoform 1 is widely expressed with strong expression in atrium and ascitic tumor, lower levels in brain and very low levels in liver and kidney. Isoform 2 is also widely expressed with highest levels in brain but no expression in kidney. Also expressed in flagella of epididymal sperm.

It localises to the mitochondrion outer membrane. The protein resides in the membrane. It catalyses the reaction chloride(in) = chloride(out). The catalysed reaction is K(+)(in) = K(+)(out). Non-selective voltage-gated ion channel that mediates the transport of anions and cations through the mitochondrion outer membrane and plasma membrane. Forms a high-conducting channel with a stable open state and a voltage-induced closure with a mild preference for anions over cations. Involved in male fertility and sperm mitochondrial sheath formation. In Rattus norvegicus (Rat), this protein is Non-selective voltage-gated ion channel VDAC3.